Reading from the N-terminus, the 158-residue chain is SKP1-like protein 18 (158 aa).

The interval 99 to 157 (ILAANYLNFEGLLGFASQTVADYIKDKTPEEVREIFNIENDFTPEEEEEIRKENAWTFN) is interaction with the F-box domain of F-box proteins.

The protein belongs to the SKP1 family. In terms of assembly, part of a SCF (SKP1-cullin-F-box) protein ligase complex. Interacts with CPR1/CPR30, EBF1, SKP2A, At3g61590, At4g38940 and At5g49610. As to expression, expressed in young seedlings, roots, leaves, floral stems, inflorescences, pollen, and siliques.

It is found in the nucleus. The protein operates within protein modification; protein ubiquitination. In terms of biological role, involved in ubiquitination and subsequent proteasomal degradation of target proteins. Together with CUL1, RBX1 and a F-box protein, it forms a SCF E3 ubiquitin ligase complex. The functional specificity of this complex depends on the type of F-box protein. In the SCF complex, it serves as an adapter that links the F-box protein to CUL1. This Arabidopsis thaliana (Mouse-ear cress) protein is SKP1-like protein 18 (ASK18).